The chain runs to 119 residues: Probable cyclase otaY (119 aa).

This sequence belongs to the aurE cyclase family.

It functions in the pathway mycotoxin biosynthesis. Probable cyclase; part of the gene cluster that mediates the biosynthesis of ochratoxin A (OTA), a mycotoxin composed of a chlorinated type I polyketide dihydroisocoumarin moiety linked to L-phenylalanine, and demonstrated to have nephrotoxic, immunotoxic, genotoxic, neurotoxic, and teratogenic properties. OtaY is probably involved in the polyketide cyclization. The pathway begins with the highly reducing polyketide synthase otaA that catalyzes the formation of the isocoumarin group during the initial stages of biosynthesis, starting from one acetate and 4 malonate units, to originate the characteristic pentaketide skeleton 7-methylmellein (7-MM) of the OTA molecule. The newly identified cyclase otaY might be involved in the polyketide cyclization reaction during the initial steps of the OTA biosynthesis. 7-MM is then oxidized into 7-carboxymellein (also called ochratoxin beta) by the cytochrome P450 monooxygenase otaC. The NRPS encoded by the otaB gene is involved in the linking of phenylalanine to the dihydroisocoumarin ring. The reaction catalyzed by NRPS results in the production of ochratoxin B (OTB), which is the non-chlorinated analog of OTA and which subsequently serves as the substrate of the halogenase otaD for chlorination activity to form the final molecular structure of OTA, containing a chlorine atom in the C-5 position of the molecule. This Aspergillus niger (strain ATCC MYA-4892 / CBS 513.88 / FGSC A1513) protein is Probable cyclase otaY.